A 125-amino-acid chain; its full sequence is Large ribosomal subunit protein bL12 (125 aa).

The protein belongs to the bacterial ribosomal protein bL12 family. In terms of assembly, homodimer. Part of the ribosomal stalk of the 50S ribosomal subunit. Forms a multimeric L10(L12)X complex, where L10 forms an elongated spine to which 2 to 4 L12 dimers bind in a sequential fashion. Binds GTP-bound translation factors.

Functionally, forms part of the ribosomal stalk which helps the ribosome interact with GTP-bound translation factors. Is thus essential for accurate translation. The polypeptide is Large ribosomal subunit protein bL12 (Rickettsia canadensis (strain McKiel)).